Consider the following 592-residue polypeptide: Frizzled-5 (592 aa).

Positions 1-38 (MRKPADEHHFTMETSGMHLVGFWLHVLLLFQLSGLGDS) are cleaved as a signal peptide. At 39–248 (ASKDIVCEPI…QDERTFTTFW (210 aa)) the chain is on the extracellular side. The region spanning 40-161 (SKDIVCEPIT…GDTDRLCMDR (122 aa)) is the FZ domain. Cystine bridges form between Cys45/Cys106, Cys53/Cys99, Cys90/Cys128, Cys117/Cys158, and Cys121/Cys145. The interval 162–192 (NSSETTTLSPPFPKPTPKGTPRHRATAKSAP) is disordered. Residues 249–269 (IGLWSVLCFVSTFTTVATFLI) traverse the membrane as a helical segment. Residues 270–280 (DMERFKYPERP) are Cytoplasmic-facing. A helical membrane pass occupies residues 281 to 301 (IIFLAACYLFVSLGYIVRLLA). Residues 302 to 327 (GHERVACEGTGDQQHILYDTTGPALC) lie on the Extracellular side of the membrane. A helical transmembrane segment spans residues 328–348 (TLVFLLIYFFGMASSIWWVVL). The Cytoplasmic segment spans residues 349 to 370 (SFTWFLAAGMKWGNEAIAGYSQ). A helical transmembrane segment spans residues 371-391 (YFHLAAWLVPSVKSIAVLALS). At 392–414 (SVDGDPVAGICYVGNQSLEGLRG) the chain is on the extracellular side. The chain crosses the membrane as a helical span at residues 415 to 435 (FVLAPLVVYLFTGSLFLLAGF). Topologically, residues 436–461 (VSLFRIRSVIKQGGTKTDKLEKLMIR) are cytoplasmic. A helical membrane pass occupies residues 462–482 (IGLFTVLYTVPATIVVACLVY). Residues 483–512 (EQHYRPSWERALACSCPSERQRLGMGPDYA) are Extracellular-facing. A helical transmembrane segment spans residues 513 to 533 (VFMLKYFMCLVVGITSGVWIW). Topologically, residues 534–592 (SGKTLESWRRFIARYVPCRTRKPPVSASSMYSEASTALTARAGTAPTGTYHKSAPSSHV) are cytoplasmic.

The protein belongs to the G-protein coupled receptor Fz/Smo family.

Its subcellular location is the cell membrane. The protein localises to the golgi apparatus membrane. The protein resides in the synapse. It is found in the perikaryon. It localises to the cell projection. Its subcellular location is the dendrite. The protein localises to the axon. Its function is as follows. Receptor for Wnt proteins. Following binding, activates the canonical Wnt/beta-catenin signaling pathway. Also activates wnt non-canonical signaling. In neurons, activation of the Wnt pathway promotes formation of synapses. May be involved in transduction and intercellular transmission of polarity information during tissue morphogenesis and/or in differentiated tissues. Plays a role in early eye development, possibly through wnt non-canonical signaling. As a receptor for wnt11, promotes eye formation, at least partially, by antagonizing the Wnt/beta-catenin pathway. In addition, promotes coherence of eye field cells, potentially contributing to the coordinated morphogenetic behaviors of cells in the nascent eye field. This chain is Frizzled-5 (fzd5), found in Danio rerio (Zebrafish).